The sequence spans 323 residues: Serine/threonine-protein phosphatase PP1-gamma catalytic subunit (323 aa).

Mn(2+) is bound by residues aspartate 64, histidine 66, aspartate 92, and asparagine 124. Histidine 125 serves as the catalytic Proton donor. Residues histidine 173 and histidine 248 each contribute to the Mn(2+) site. The segment at 300–323 (EKKKPNASRPVTPPRGMITKQAKK) is disordered.

Belongs to the PPP phosphatase family. PP-1 subfamily. PP1 comprises a catalytic subunit, ppp1c1, ppp1cb or ppp1cc, which is folded into its native form by inhibitor 2 and glycogen synthetase kinase 3, and then is complexed to one or several targeting or regulatory subunits. Mn(2+) is required as a cofactor.

It is found in the cytoplasm. The protein localises to the nucleus. The protein resides in the cleavage furrow. Its subcellular location is the nucleolus. It localises to the nucleoplasm. It is found in the chromosome. The protein localises to the centromere. The protein resides in the kinetochore. Its subcellular location is the nucleus speckle. It localises to the midbody. It is found in the mitochondrion. The protein localises to the cytoskeleton. The protein resides in the microtubule organizing center. It carries out the reaction O-phospho-L-seryl-[protein] + H2O = L-seryl-[protein] + phosphate. The enzyme catalyses O-phospho-L-threonyl-[protein] + H2O = L-threonyl-[protein] + phosphate. Its function is as follows. Protein phosphatase 1 (PP1) is essential for cell division, and participates in the regulation of glycogen metabolism, muscle contractility and protein synthesis. Promotes nuclear envelope reassembly by targeting nuclear membrane vesicles to chromatin at the end of mitosis. Acts by dephosphorylating membrane proteins such as lamin B receptor (lbr) to regulate the binding of membrane proteins to chromatin. This Xenopus tropicalis (Western clawed frog) protein is Serine/threonine-protein phosphatase PP1-gamma catalytic subunit.